Reading from the N-terminus, the 206-residue chain is Uridine kinase (206 aa).

9–16 is a binding site for ATP; the sequence is GGSGSGKT.

The protein belongs to the uridine kinase family.

Its subcellular location is the cytoplasm. The enzyme catalyses uridine + ATP = UMP + ADP + H(+). It catalyses the reaction cytidine + ATP = CMP + ADP + H(+). Its pathway is pyrimidine metabolism; CTP biosynthesis via salvage pathway; CTP from cytidine: step 1/3. It functions in the pathway pyrimidine metabolism; UMP biosynthesis via salvage pathway; UMP from uridine: step 1/1. The protein is Uridine kinase of Borrelia hermsii (strain HS1 / DAH).